Here is a 233-residue protein sequence, read N- to C-terminus: Ubiquitin carboxyl-terminal hydrolase isozyme L4 (233 aa).

Residues 5–232 form the UCH catalytic domain; it reads RWLPLEANPE…LRFNAIALSA (228 aa). The interaction with ubiquitin stretch occupies residues 8 to 13; that stretch reads PLEANP. Cysteine 95 acts as the Nucleophile in catalysis. Serine 133 carries the post-translational modification Phosphoserine. Catalysis depends on histidine 172, which acts as the Proton donor. The segment at 222–227 is interaction with ubiquitin; that stretch reads ELRFNA.

The protein belongs to the peptidase C12 family. Expressed in various tissues at low level.

The protein localises to the cytoplasm. The catalysed reaction is Thiol-dependent hydrolysis of ester, thioester, amide, peptide and isopeptide bonds formed by the C-terminal Gly of ubiquitin (a 76-residue protein attached to proteins as an intracellular targeting signal).. Ubiquitin-protein hydrolase is involved both in the processing of ubiquitin precursors and of ubiquitinated proteins. This enzyme is a thiol protease that recognizes and hydrolyzes a peptide bond at the C-terminal glycine of ubiquitin. The polypeptide is Ubiquitin carboxyl-terminal hydrolase isozyme L4 (Uchl4) (Mus musculus (Mouse)).